The primary structure comprises 676 residues: RNA helicase NPH-II (676 aa).

The 176-residue stretch at 172–347 folds into the Helicase ATP-binding domain; it reads FSAWISHRPV…VFLPNPAFIH (176 aa). 185 to 192 contacts ATP; sequence GGTGVGKT. The DEXH box signature appears at 296-299; sequence DEVH. Positions 366–535 constitute a Helicase C-terminal domain; the sequence is NPSSRMAYIE…NYILYANKFN (170 aa).

The protein belongs to the DEAD box helicase family. DEAH subfamily. In terms of assembly, monomer.

The protein localises to the virion. The catalysed reaction is ATP + H2O = ADP + phosphate + H(+). In terms of biological role, NTP-dependent helicase that catalyzes unidirectional unwinding of 3'tailed duplex RNAs and plays an important role during transcription of early mRNAs, presumably by preventing R-loop formation behind the elongating RNA polymerase. Might also play a role in the export of newly synthesized mRNA chains out of the core into the cytoplasm. Required for replication and propagation of viral particles. The chain is RNA helicase NPH-II (OPG084) from Vaccinia virus (strain Copenhagen) (VACV).